Consider the following 380-residue polypeptide: Chorismate synthase (380 aa).

Residue arginine 48 coordinates NADP(+). FMN-binding positions include 126–128 (HFS), glycine 300, 315–319 (KPISS), and arginine 342.

It belongs to the chorismate synthase family. Homotetramer. FMNH2 serves as cofactor.

The catalysed reaction is 5-O-(1-carboxyvinyl)-3-phosphoshikimate = chorismate + phosphate. Its pathway is metabolic intermediate biosynthesis; chorismate biosynthesis; chorismate from D-erythrose 4-phosphate and phosphoenolpyruvate: step 7/7. Catalyzes the anti-1,4-elimination of the C-3 phosphate and the C-6 proR hydrogen from 5-enolpyruvylshikimate-3-phosphate (EPSP) to yield chorismate, which is the branch point compound that serves as the starting substrate for the three terminal pathways of aromatic amino acid biosynthesis. This reaction introduces a second double bond into the aromatic ring system. The sequence is that of Chorismate synthase from Lancefieldella parvula (strain ATCC 33793 / DSM 20469 / CCUG 32760 / JCM 10300 / KCTC 3663 / VPI 0546 / 1246) (Atopobium parvulum).